We begin with the raw amino-acid sequence, 438 residues long: DEAD-box ATP-dependent RNA helicase 58, chloroplastic (438 aa).

A chloroplast-targeting transit peptide spans 1-44 (MAAFSGCASPLSTTLRSGLAPFTLRHRLRLRRLRASAATLREVC). A Q motif motif is present at residues 41-69 (REVCAGRVPEHVLQRAEEVGYVVPTEVQE). The Helicase ATP-binding domain occupies 72–245 (LPVLLSGQDC…DCVQHKWTKT (174 aa)). Position 85 to 92 (85 to 92 (AQTGSGKT)) interacts with ATP. A DEAD box motif is present at residues 190-193 (DEVD). Residues 274–436 (RLHVLLSLLE…ELPVESMFAF (163 aa)) enclose the Helicase C-terminal domain.

It belongs to the DEAD box helicase family.

Its subcellular location is the plastid. The protein localises to the chloroplast. It catalyses the reaction ATP + H2O = ADP + phosphate + H(+). The chain is DEAD-box ATP-dependent RNA helicase 58, chloroplastic from Oryza sativa subsp. japonica (Rice).